Here is a 402-residue protein sequence, read N- to C-terminus: Centromere protein C (402 aa).

Residue lysine 1 forms a Glycyl lysine isopeptide (Lys-Gly) (interchain with G-Cter in SUMO2) linkage. The segment covering 1–12 (KSEQSSFSSSSS) has biased composition (low complexity). The interval 1-118 (KSEQSSFSSS…HQKSQMSVET (118 aa)) is disordered. A Phosphoserine modification is found at serine 5. A Nuclear localization signal motif is present at residues 25–42 (QKPPAEKTNQSSKNIGKK). Residues 44–53 (APFKKQKRAN) are compositionally biased toward basic residues. Polar residues predominate over residues 88–118 (PNPSGDTGSSKNQDSMAAQNVHQKSQMSVET). Residue lysine 186 forms a Glycyl lysine isopeptide (Lys-Gly) (interchain with G-Cter in SUMO2) linkage. A Phosphothreonine modification is found at threonine 193. The tract at residues 196–218 (VRRTMRTRSKPLEYWRGERIDYQ) is MIF2 homology domain II. Phosphoserine is present on residues serine 222 and serine 232. The Nuclear localization signal motif lies at 239 to 257 (KRKAKGNLGRIITTANRKR). Residue lysine 266 forms a Glycyl lysine isopeptide (Lys-Gly) (interchain with G-Cter in SUMO2) linkage. Residues 349–402 (LVFYVNLGYLLCTLHETPYIVTTGDSFYVPSGNYYNIKNLLNEERVLLFTQIKS) are MIF2 homology domain III.

It belongs to the CENP-C/MIF2 family. As to quaternary structure, oligomer. Component of the CENPA-NAC complex, at least composed of CENPA, CENPC, CENPH, CENPM, CENPN, CENPT and CENPU. The CENPA-NAC complex interacts with the CENPA-CAD complex, composed of CENPI, CENPK, CENPL, CENPO, CENPP, CENPQ, CENPR and CENPS. Binds to DAXX. Interacts with DNMT3B. Interacts directly with CENPA. Identified in a centromere complex containing histones H2A, H2B and H4, and at least CENPA, CENPB, CENPC, CENPT, CENPN, HJURP, SUPT16H, SSRP1 and RSF1. Interacts with MEIKIN.

It is found in the nucleus. The protein resides in the chromosome. It localises to the centromere. Its subcellular location is the kinetochore. In terms of biological role, component of the CENPA-NAC (nucleosome-associated) complex, a complex that plays a central role in assembly of kinetochore proteins, mitotic progression and chromosome segregation. The CENPA-NAC complex recruits the CENPA-CAD (nucleosome distal) complex and may be involved in incorporation of newly synthesized CENPA into centromeres. CENPC recruits DNA methylation and DNMT3B to both centromeric and pericentromeric satellite repeats and regulates the histone code in these regions. This is Centromere protein C (CENPC) from Ovis aries (Sheep).